Reading from the N-terminus, the 610-residue chain is DNA mismatch repair protein MutL (610 aa).

This sequence belongs to the DNA mismatch repair MutL/HexB family.

Functionally, this protein is involved in the repair of mismatches in DNA. It is required for dam-dependent methyl-directed DNA mismatch repair. May act as a 'molecular matchmaker', a protein that promotes the formation of a stable complex between two or more DNA-binding proteins in an ATP-dependent manner without itself being part of a final effector complex. In Rickettsia peacockii (strain Rustic), this protein is DNA mismatch repair protein MutL.